A 434-amino-acid polypeptide reads, in one-letter code: MSAGTATDTTDLDSFFSAHLAETDPEIAKAISQELGRQQHEIELIASENIVSRAVLEAQGSVLTNKYAEGYPGRRYYGGCQFVDIAEELAIDRAKRLFGCGFANVQPNSGSQANQGVFMALMQPGDTFLGLDLAAGGHLTHGAPPNVSGKWFKPVSYTVRREDQRIDMEQVERLAQEHKPKVIIAGGSGYPRHWDFAKFREIADSVGAYFFVDMAHFAGLVAAGLHPSPFPHAHVATTTTHKTLRGPRGGMILTNDEALAKKFNSAIFPGLQGGPLMHVIAAKAVAFGEALKPEFKIYAKQVIDNARALADTIISGGYDITSGGTDNHLMLVDLQKKGLTGKAAEAALSRADITCNKNGVPFDPQKPTITSGIRLGTPASTTRGFGVAEFKQVGSLIVQVLDGIAEKGDGGDAAVEAAVKEKVHALTDRFPIYA.

(6S)-5,6,7,8-tetrahydrofolate is bound by residues Leu133 and 137 to 139; that span reads GHL. At Lys242 the chain carries N6-(pyridoxal phosphate)lysine.

Belongs to the SHMT family. In terms of assembly, homodimer. Pyridoxal 5'-phosphate serves as cofactor.

It localises to the cytoplasm. It catalyses the reaction (6R)-5,10-methylene-5,6,7,8-tetrahydrofolate + glycine + H2O = (6S)-5,6,7,8-tetrahydrofolate + L-serine. It participates in one-carbon metabolism; tetrahydrofolate interconversion. The protein operates within amino-acid biosynthesis; glycine biosynthesis; glycine from L-serine: step 1/1. Functionally, catalyzes the reversible interconversion of serine and glycine with tetrahydrofolate (THF) serving as the one-carbon carrier. This reaction serves as the major source of one-carbon groups required for the biosynthesis of purines, thymidylate, methionine, and other important biomolecules. Also exhibits THF-independent aldolase activity toward beta-hydroxyamino acids, producing glycine and aldehydes, via a retro-aldol mechanism. The polypeptide is Serine hydroxymethyltransferase (Methylorubrum extorquens (strain CM4 / NCIMB 13688) (Methylobacterium extorquens)).